The chain runs to 364 residues: DNA replication and repair protein RecF (364 aa).

Residue 30–37 (GNNGQGKT) participates in ATP binding.

The protein belongs to the RecF family.

Its subcellular location is the cytoplasm. Its function is as follows. The RecF protein is involved in DNA metabolism; it is required for DNA replication and normal SOS inducibility. RecF binds preferentially to single-stranded, linear DNA. It also seems to bind ATP. The sequence is that of DNA replication and repair protein RecF from Geobacter sp. (strain M21).